Consider the following 718-residue polypeptide: Probable trehalose-phosphatase (718 aa).

The interval 449-470 is disordered; that stretch reads LSMDQTGHKKVDAKKKPGIRKK. Residues 459–470 are compositionally biased toward basic residues; that stretch reads VDAKKKPGIRKK.

The protein in the N-terminal section; belongs to the glycosyltransferase 20 family. In the C-terminal section; belongs to the trehalose phosphatase family.

It carries out the reaction alpha,alpha-trehalose 6-phosphate + H2O = alpha,alpha-trehalose + phosphate. This Encephalitozoon cuniculi (strain GB-M1) (Microsporidian parasite) protein is Probable trehalose-phosphatase.